Here is a 173-residue protein sequence, read N- to C-terminus: Shikimate kinase 1 (173 aa).

Residue 14–19 (GAGKST) coordinates ATP. Ser18 lines the Mg(2+) pocket. Asp36, Arg60, and Gly82 together coordinate substrate. Arg120 is an ATP binding site. Arg140 contributes to the substrate binding site. Gln157 contacts ATP.

The protein belongs to the shikimate kinase family. In terms of assembly, monomer. The cofactor is Mg(2+).

It is found in the cytoplasm. The enzyme catalyses shikimate + ATP = 3-phosphoshikimate + ADP + H(+). The protein operates within metabolic intermediate biosynthesis; chorismate biosynthesis; chorismate from D-erythrose 4-phosphate and phosphoenolpyruvate: step 5/7. Catalyzes the specific phosphorylation of the 3-hydroxyl group of shikimic acid using ATP as a cosubstrate. The protein is Shikimate kinase 1 of Escherichia fergusonii (strain ATCC 35469 / DSM 13698 / CCUG 18766 / IAM 14443 / JCM 21226 / LMG 7866 / NBRC 102419 / NCTC 12128 / CDC 0568-73).